The chain runs to 345 residues: MQRLVEVESVSFEEDNNEISLRPSNWDDYIGQEKIKKNLRVFIDASKKRKEALDHILFYGPPGLGKTTLSYLISNEMNTNIKVTAGPMIEKSGDLAAILTNLEEGDILFIDEIHRLSPAVEEILYPAMEDYRLDIIIGSGPAAQTVKIDLPRFTLIGATTRAGMLSNPLRERFGMHFRMQFYTEIELAKIIQKASLKLGKNCEDDASLEISKRSRGTPRVALRLLRRVRDFSEVENEKSIHLQRCKYALDELGVNESGFDEMDINLLELLISNRGKPMGLSTIAAALSEDEGTIEDAIEPYLLANGYIERTARGRVASVKTYEMFRLSYPTSLKLEDDLTQGKLF.

Residues Met-1 to Tyr-182 form a large ATPase domain (RuvB-L) region. ATP is bound by residues Leu-21, Arg-22, Gly-63, Lys-66, Thr-67, Thr-68, Glu-129–Tyr-131, Arg-172, Tyr-182, and Arg-219. Thr-67 is a Mg(2+) binding site. The segment at Thr-183–Gly-253 is small ATPAse domain (RuvB-S). A head domain (RuvB-H) region spans residues Glu-256–Phe-345. The DNA site is built by Arg-310 and Arg-315.

This sequence belongs to the RuvB family. As to quaternary structure, homohexamer. Forms an RuvA(8)-RuvB(12)-Holliday junction (HJ) complex. HJ DNA is sandwiched between 2 RuvA tetramers; dsDNA enters through RuvA and exits via RuvB. An RuvB hexamer assembles on each DNA strand where it exits the tetramer. Each RuvB hexamer is contacted by two RuvA subunits (via domain III) on 2 adjacent RuvB subunits; this complex drives branch migration. In the full resolvosome a probable DNA-RuvA(4)-RuvB(12)-RuvC(2) complex forms which resolves the HJ.

The protein resides in the cytoplasm. It catalyses the reaction ATP + H2O = ADP + phosphate + H(+). The RuvA-RuvB-RuvC complex processes Holliday junction (HJ) DNA during genetic recombination and DNA repair, while the RuvA-RuvB complex plays an important role in the rescue of blocked DNA replication forks via replication fork reversal (RFR). RuvA specifically binds to HJ cruciform DNA, conferring on it an open structure. The RuvB hexamer acts as an ATP-dependent pump, pulling dsDNA into and through the RuvAB complex. RuvB forms 2 homohexamers on either side of HJ DNA bound by 1 or 2 RuvA tetramers; 4 subunits per hexamer contact DNA at a time. Coordinated motions by a converter formed by DNA-disengaged RuvB subunits stimulates ATP hydrolysis and nucleotide exchange. Immobilization of the converter enables RuvB to convert the ATP-contained energy into a lever motion, pulling 2 nucleotides of DNA out of the RuvA tetramer per ATP hydrolyzed, thus driving DNA branch migration. The RuvB motors rotate together with the DNA substrate, which together with the progressing nucleotide cycle form the mechanistic basis for DNA recombination by continuous HJ branch migration. Branch migration allows RuvC to scan DNA until it finds its consensus sequence, where it cleaves and resolves cruciform DNA. This is Holliday junction branch migration complex subunit RuvB from Aliarcobacter butzleri (strain RM4018) (Arcobacter butzleri).